The chain runs to 1394 residues: Kinesin-like protein KIF27 (1394 aa).

In terms of domain architecture, Kinesin motor spans 5–341; sequence PIKVAVRIRP…LKYANRARNI (337 aa). 84–91 is an ATP binding site; sequence GQTGSGKT. 2 coiled-coil regions span residues 352–418 and 498–554; these read QADR…IEQA and QKDL…ELAK. Disordered regions lie at residues 559 to 582 and 642 to 665; these read VPTS…RPHT and FSDN…RSHS. Residues 571-580 are compositionally biased toward basic and acidic residues; sequence PDARASEKRP. Ser643, Ser646, Ser672, Ser675, and Ser704 each carry phosphoserine. 4 coiled-coil regions span residues 709–891, 921–1078, 1118–1152, and 1186–1226; these read LQKL…GQGE, LDEQ…SIQS, NKVI…HELE, and DQDG…RLKD. A disordered region spans residues 886-916; sequence KAGQGEGLNPKAEDQDGFNLNRRKSPFRSGD. A Phosphoserine modification is found at Ser999. A compositionally biased stretch (basic and acidic residues) spans 1267-1280; the sequence is TENTKLNGSEREVD. 2 disordered regions span residues 1267 to 1319 and 1325 to 1344; these read TENT…LQSI and ARPF…PVRS. Polar residues-rich tracts occupy residues 1281-1295 and 1309-1319; these read NSSS…TQQI and IAPSSGQLQSI. Phosphoserine occurs at positions 1365 and 1387.

Belongs to the TRAFAC class myosin-kinesin ATPase superfamily. Kinesin family. KIF27 subfamily. In terms of assembly, interacts with STK36.

It is found in the cytoplasm. The protein localises to the cytoskeleton. It localises to the cell projection. Its subcellular location is the cilium. Its function is as follows. Plays an essential role in motile ciliogenesis. The chain is Kinesin-like protein KIF27 (Kif27) from Mus musculus (Mouse).